A 464-amino-acid chain; its full sequence is tRNA modification GTPase MnmE (464 aa).

(6S)-5-formyl-5,6,7,8-tetrahydrofolate contacts are provided by Arg-27, Glu-89, and Arg-128. Positions 225–384 constitute a TrmE-type G domain; sequence GLATAIIGHP…LEDRIAAMFF (160 aa). A K(+)-binding site is contributed by Asn-235. GTP is bound by residues 235-240, 254-260, and 279-282; these read NVGKSS, TDVAGTT, and DTAG. Ser-239 is a Mg(2+) binding site. K(+) contacts are provided by Thr-254, Val-256, and Thr-259. Thr-260 lines the Mg(2+) pocket. Residue Lys-464 participates in (6S)-5-formyl-5,6,7,8-tetrahydrofolate binding.

This sequence belongs to the TRAFAC class TrmE-Era-EngA-EngB-Septin-like GTPase superfamily. TrmE GTPase family. In terms of assembly, homodimer. Heterotetramer of two MnmE and two MnmG subunits. K(+) serves as cofactor.

It localises to the cytoplasm. Exhibits a very high intrinsic GTPase hydrolysis rate. Involved in the addition of a carboxymethylaminomethyl (cmnm) group at the wobble position (U34) of certain tRNAs, forming tRNA-cmnm(5)s(2)U34. The polypeptide is tRNA modification GTPase MnmE (Pediococcus pentosaceus (strain ATCC 25745 / CCUG 21536 / LMG 10740 / 183-1w)).